The primary structure comprises 212 residues: Imidazole glycerol phosphate synthase subunit HisH (212 aa).

The Glutamine amidotransferase type-1 domain occupies 3–212 (TVAVIDYGMG…QNFIAWDGRW (210 aa)). The Nucleophile role is filled by Cys81. Catalysis depends on residues His190 and Glu192.

Heterodimer of HisH and HisF.

The protein localises to the cytoplasm. It catalyses the reaction 5-[(5-phospho-1-deoxy-D-ribulos-1-ylimino)methylamino]-1-(5-phospho-beta-D-ribosyl)imidazole-4-carboxamide + L-glutamine = D-erythro-1-(imidazol-4-yl)glycerol 3-phosphate + 5-amino-1-(5-phospho-beta-D-ribosyl)imidazole-4-carboxamide + L-glutamate + H(+). The catalysed reaction is L-glutamine + H2O = L-glutamate + NH4(+). Its pathway is amino-acid biosynthesis; L-histidine biosynthesis; L-histidine from 5-phospho-alpha-D-ribose 1-diphosphate: step 5/9. IGPS catalyzes the conversion of PRFAR and glutamine to IGP, AICAR and glutamate. The HisH subunit catalyzes the hydrolysis of glutamine to glutamate and ammonia as part of the synthesis of IGP and AICAR. The resulting ammonia molecule is channeled to the active site of HisF. This Pseudomonas putida (strain ATCC 47054 / DSM 6125 / CFBP 8728 / NCIMB 11950 / KT2440) protein is Imidazole glycerol phosphate synthase subunit HisH.